The chain runs to 313 residues: Protein FixB (313 aa).

Leu255–Asp283 is an FAD binding site.

It belongs to the ETF alpha-subunit/FixB family. As to quaternary structure, heterodimer of FixA and FixB.

Its pathway is amine and polyamine metabolism; carnitine metabolism. In terms of biological role, required for anaerobic carnitine reduction. May bring reductant to CaiA. In Escherichia coli O139:H28 (strain E24377A / ETEC), this protein is Protein FixB.